Here is a 440-residue protein sequence, read N- to C-terminus: Transposon Ty1-ML1 Gag polyprotein (440 aa).

3 stretches are compositionally biased toward polar residues: residues 1–23 (MESQ…SVTS), 48–60 (TKAN…TPAS), and 127–152 (QSQF…GNTF). Disordered regions lie at residues 1 to 88 (MESQ…YPQQ), 126 to 173 (PQSQ…RPPP), and 352 to 440 (GSRN…PETY). Over residues 153–165 (TDSSSADSDMTST) the composition is skewed to low complexity. Positions 299–401 (NNGIHINNKV…NSKSKTARAH (103 aa)) are RNA-binding. A compositionally biased stretch (low complexity) spans 402–418 (NVSTSNNSPSTDNDSIS). S416 carries the phosphoserine modification. The segment covering 419–428 (KSTTEPIQLN) has biased composition (polar residues). Residues 429 to 440 (NKHDLHLRPETY) show a composition bias toward basic and acidic residues.

Homotrimer.

It localises to the cytoplasm. In terms of biological role, capsid protein (CA) is the structural component of the virus-like particle (VLP), forming the shell that encapsulates the retrotransposons dimeric RNA genome. The particles are assembled from trimer-clustered units and there are holes in the capsid shells that allow for the diffusion of macromolecules. CA also has nucleocapsid-like chaperone activity, promoting primer tRNA(i)-Met annealing to the multipartite primer-binding site (PBS), dimerization of Ty1 RNA and initiation of reverse transcription. The polypeptide is Transposon Ty1-ML1 Gag polyprotein (TY1A-ML1) (Saccharomyces cerevisiae (strain ATCC 204508 / S288c) (Baker's yeast)).